The following is a 454-amino-acid chain: 3-phosphoshikimate 1-carboxyvinyltransferase (454 aa).

A disordered region spans residues 1 to 31; it reads MSENHSEGASRPVISRRPAAGLRADHPVHVP. Residues Lys-34, Ser-35, and Arg-39 each contribute to the 3-phosphoshikimate site. Lys-34 contacts phosphoenolpyruvate. Residues Gly-107 and Arg-135 each coordinate phosphoenolpyruvate. The 3-phosphoshikimate site is built by Ser-180, Gln-182, Asp-334, and Lys-361. Gln-182 contacts phosphoenolpyruvate. Residue Asp-334 is the Proton acceptor of the active site. Phosphoenolpyruvate contacts are provided by Arg-365 and Arg-409.

Belongs to the EPSP synthase family. In terms of assembly, monomer.

It localises to the cytoplasm. It catalyses the reaction 3-phosphoshikimate + phosphoenolpyruvate = 5-O-(1-carboxyvinyl)-3-phosphoshikimate + phosphate. It participates in metabolic intermediate biosynthesis; chorismate biosynthesis; chorismate from D-erythrose 4-phosphate and phosphoenolpyruvate: step 6/7. In terms of biological role, catalyzes the transfer of the enolpyruvyl moiety of phosphoenolpyruvate (PEP) to the 5-hydroxyl of shikimate-3-phosphate (S3P) to produce enolpyruvyl shikimate-3-phosphate and inorganic phosphate. This is 3-phosphoshikimate 1-carboxyvinyltransferase from Granulibacter bethesdensis (strain ATCC BAA-1260 / CGDNIH1).